We begin with the raw amino-acid sequence, 308 residues long: Olfactory receptor 4N5 (308 aa).

Residues methionine 1–leucine 25 lie on the Extracellular side of the membrane. Residue asparagine 5 is glycosylated (N-linked (GlcNAc...) asparagine). The helical transmembrane segment at leucine 26–isoleucine 49 threads the bilayer. Residues lysine 50–alanine 57 lie on the Cytoplasmic side of the membrane. The chain crosses the membrane as a helical span at residues proline 58 to proline 79. At arginine 80–glutamine 100 the chain is on the extracellular side. An intrachain disulfide couples cysteine 97 to cysteine 189. A helical transmembrane segment spans residues leucine 101–phenylalanine 120. Residues aspartate 121–arginine 139 lie on the Cytoplasmic side of the membrane. The chain crosses the membrane as a helical span at residues alanine 140–valine 158. Over glutamine 159 to valine 195 the chain is Extracellular. The chain crosses the membrane as a helical span at residues glutamate 196 to alanine 219. The Cytoplasmic portion of the chain corresponds to valine 220 to lysine 235. Residues alanine 236–tyrosine 258 form a helical membrane-spanning segment. Over threonine 259–lysine 269 the chain is Extracellular. The helical transmembrane segment at valine 270–leucine 289 threads the bilayer. The Cytoplasmic portion of the chain corresponds to arginine 290–cysteine 308.

It belongs to the G-protein coupled receptor 1 family.

It localises to the cell membrane. In terms of biological role, odorant receptor. The polypeptide is Olfactory receptor 4N5 (OR4N5) (Homo sapiens (Human)).